The primary structure comprises 164 residues: MSELTHFDAKGNAWMVDITEKEETHRVAEVRGEVVMAPATLELIQQGGMAKGDVLGVARVAGIMAAKSTPNLIPMAHPIMITGVNIDFQILPPDRVEIRGLVKTGGKTGVEMEALTAVSVAALTIYDMCKAVDKGMMIQNIRLVSKSGGKSGDFMREGESQWEK.

Substrate contacts are provided by residues M75–H77 and M112–E113. D127 is a catalytic residue.

The protein belongs to the MoaC family. Homohexamer; trimer of dimers.

The enzyme catalyses (8S)-3',8-cyclo-7,8-dihydroguanosine 5'-triphosphate = cyclic pyranopterin phosphate + diphosphate. It participates in cofactor biosynthesis; molybdopterin biosynthesis. Functionally, catalyzes the conversion of (8S)-3',8-cyclo-7,8-dihydroguanosine 5'-triphosphate to cyclic pyranopterin monophosphate (cPMP). The polypeptide is Cyclic pyranopterin monophosphate synthase (Desulforamulus reducens (strain ATCC BAA-1160 / DSM 100696 / MI-1) (Desulfotomaculum reducens)).